The chain runs to 177 residues: Endoribonuclease YbeY (177 aa).

Zn(2+) is bound by residues H118, H122, and H128.

It belongs to the endoribonuclease YbeY family. The cofactor is Zn(2+).

Its subcellular location is the cytoplasm. Its function is as follows. Single strand-specific metallo-endoribonuclease involved in late-stage 70S ribosome quality control and in maturation of the 3' terminus of the 16S rRNA. This is Endoribonuclease YbeY from Mycobacterium sp. (strain JLS).